Here is a 100-residue protein sequence, read N- to C-terminus: MSAAKQCFRNLWRASNSVFEGDPMILAAARDKIRTGFHNHRCCSPEEAKKEIQNGNAVAEILRRNVVQAEKQSNDTYSLKIRKTTEINTNRQFTEKKFPR.

The protein belongs to the complex I LYR family. MZM1 subfamily. In terms of assembly, interacts with RIP1.

It localises to the mitochondrion matrix. Its function is as follows. Assembly factor required for Rieske Fe-S protein RIP1 incorporation into the cytochrome b-c1 (CIII) complex. Functions as a chaperone, binding to this subunit within the mitochondrial matrix and stabilizing it prior to its translocation and insertion into the late CIII dimeric intermediate within the mitochondrial inner membrane. Modulates the mitochondrial matrix zinc pool. The protein is Mitochondrial zinc maintenance protein 1, mitochondrial (new18) of Schizosaccharomyces pombe (strain 972 / ATCC 24843) (Fission yeast).